We begin with the raw amino-acid sequence, 618 residues long: Pyocin-S1 (618 aa).

This sequence belongs to the colicin/pyosin nuclease family. As to quaternary structure, purified pyocin S1 makes up a complex of the two (large and small) proteins. The large protein, but not the pyocin complex, shows in vitro DNase activity.

Its function is as follows. Causes breakdown of chromosomal DNA as well as complete inhibition of lipid synthesis in sensitive cells. The polypeptide is Pyocin-S1 (pys1) (Pseudomonas aeruginosa).